The sequence spans 443 residues: Intermediate filament protein ifd-2 (443 aa).

A head region spans residues 1–58 (MTDPLNPTRLQNHPALARIIESGRTNLPTGITTSGALSAYAQNAAAIIRDNREREKVE). The IF rod domain occupies 55–405 (EKVEIADLNN…KLMENAEHLR (351 aa)). A coil 1A region spans residues 59-90 (IADLNNRLARYVEKVRFLEAQNRVLENDIGVF). The segment at 91–104 (RNAAHTHSERIAVY) is linker 1. The coil 1B stretch occupies residues 105–239 (FESEKASLFT…SQHDIAIREE (135 aa)). Positions 240–257 (ISKARRDTTNKNRDYFHN) are linker 12. The interval 258-403 (ELHAAMKEIR…YRKLMENAEH (146 aa)) is coil 2. The segment at 404–443 (LRTTVQTHVTYNAPPPPLPQSGPRTTSYHAYGSAYNDSLL) is tail.

This sequence belongs to the intermediate filament family.

The protein resides in the cytoplasm. Cytoplasmic intermediate filaments provide mechanical strength to cells. Not essential protein. This chain is Intermediate filament protein ifd-2 (ifd-2), found in Caenorhabditis elegans.